The primary structure comprises 464 residues: MAASPAAGAAAATVSSFVSPSSFSSVKASKPDRLRPARRAAAVNVRCVSSPPATETSFKTKVPRNANMAKLQAGYLFPEIARRRAAHLLKFPDAKIISLGIGDTTEPIPDVITNAMAKRAHALSTVDGYSGYGAEQGEKKLRAAIAATYYADLGIEETDIFVSDGAKCDISRLQVLFGSNVKIAVQDPSYPAYVDSSVIMGQTGLYQEDVQKYGNIEYMKCSPENGFFPDLSSVPRTDIIFFCSPNNPTGAAASRDQLTKLVKFAKDNGSIIVYDSAYAMYISDDSPKSIFEIPGAKEVAIETASFSKYAGFTGVRLGWTVVPKELLFSDGHPVAKDFNRIVCTCFNGASNISQAGGLGCLSPEGLKAMSDVVGFYKENTKIIVDTFTSLGFNVYGAKNAPYVWVHFPGRNSWDVFAEILEKAHVVTTPGSGFGPGGEGFVRVSAFGHRENIIEAARRLKQLYK.

Residues 1–39 constitute a chloroplast transit peptide; sequence MAASPAAGAAAATVSSFVSPSSFSSVKASKPDRLRPARR. G102 contacts substrate. Y132 serves as a coordination point for pyridoxal 5'-phosphate. Residues E135, K167, Y190, and N247 each coordinate substrate. The pyridoxal 5'-phosphate site is built by N247, D275, Y278, S305, and S307. Residue K308 is modified to N6-(pyridoxal phosphate)lysine. R316 contacts pyridoxal 5'-phosphate. The substrate site is built by N347 and R442.

This sequence belongs to the class-I pyridoxal-phosphate-dependent aminotransferase family. LL-diaminopimelate aminotransferase subfamily. In terms of assembly, homodimer. The cofactor is pyridoxal 5'-phosphate.

The protein localises to the plastid. It is found in the chloroplast. The enzyme catalyses (2S,6S)-2,6-diaminopimelate + 2-oxoglutarate = (S)-2,3,4,5-tetrahydrodipicolinate + L-glutamate + H2O + H(+). The protein operates within amino-acid biosynthesis; L-lysine biosynthesis via DAP pathway; LL-2,6-diaminopimelate from (S)-tetrahydrodipicolinate (aminotransferase route): step 1/1. Functionally, required for lysine biosynthesis. Catalyzes the direct conversion of tetrahydrodipicolinate to LL-diaminopimelate, a reaction that requires three enzymes in E.coli. The polypeptide is Probable LL-diaminopimelate aminotransferase, chloroplastic (AGD2) (Oryza sativa subsp. japonica (Rice)).